The primary structure comprises 520 residues: Protein RCC2 (520 aa).

The segment at 1–78 (MPRKKGAAWE…RPATAGKAAG (78 aa)) is disordered. Ser-14 carries the post-translational modification Phosphoserine. At Thr-18 the chain carries Phosphothreonine. The span at 22–34 (GPRRRGGPAGRKR) shows a compositional bias: basic residues. Residues Ser-41, Ser-42, Ser-43, Ser-44, Ser-48, and Ser-49 each carry the phosphoserine modification. Residues 69–78 (RPATAGKAAG) show a composition bias toward low complexity. N6-acetyllysine occurs at positions 90 and 122. 7 RCC1 repeats span residues 101–163 (KGQL…SLLI), 166–217 (EGKL…ALTD), 219–269 (GSVF…LMDC), 271–345 (GNLY…VLDS), 346–399 (QKRV…AVSE), 401–445 (GGLF…VAAD), and 446–499 (ESTI…VIAR). An N6-acetyllysine modification is found at Lys-291. A required for interaction with RAC1 region spans residues 316 to 323 (KTKDGQIL). Thr-340 is modified (phosphothreonine). Lys-375 is modified (N6-acetyllysine).

In terms of assembly, interacts with RAC1. Interacts with nucleotide-free and with GDP and GTP-bound forms of RAC1, with a slight preference for GDP-bound RAC1. Binds preferentially to the nucleotide-free form of RAC1. Interacts with CORO1C. Interacts with microtubules.

The protein resides in the nucleus. It localises to the nucleolus. The protein localises to the cytoplasm. It is found in the cytoskeleton. Its subcellular location is the chromosome. The protein resides in the centromere. It localises to the spindle. The protein localises to the midbody. It is found in the cell membrane. Multifunctional protein that may affect its functions by regulating the activity of small GTPases, such as RAC1 and RALA. Required for normal progress through the cell cycle, both during interphase and during mitosis. Required for the presence of normal levels of MAD2L1, AURKB and BIRC5 on inner centromeres during mitosis, and for normal attachment of kinetochores to mitotic spindles. Required for normal organization of the microtubule cytoskeleton in interphase cells. Functions as a guanine nucleotide exchange factor (GEF) for RALA. Interferes with the activation of RAC1 by guanine nucleotide exchange factors. Prevents accumulation of active, GTP-bound RAC1, and suppresses RAC1-mediated reorganization of the actin cytoskeleton and formation of membrane protrusions. Required for normal cellular responses to contacts with the extracellular matrix of adjacent cells, and for directional cell migration in response to a fibronectin gradient (in vitro). The polypeptide is Protein RCC2 (Rcc2) (Mus musculus (Mouse)).